A 39-amino-acid chain; its full sequence is Large ribosomal subunit protein bL12 (39 aa).

Belongs to the bacterial ribosomal protein bL12 family. Homodimer. Part of the ribosomal stalk of the 50S ribosomal subunit. Forms a multimeric L10(L12)X complex, where L10 forms an elongated spine to which 2 to 4 L12 dimers bind in a sequential fashion. Binds GTP-bound translation factors.

Forms part of the ribosomal stalk which helps the ribosome interact with GTP-bound translation factors. Is thus essential for accurate translation. The protein is Large ribosomal subunit protein bL12 (rplL) of Arthrobacter glacialis.